A 392-amino-acid chain; its full sequence is Dual-specificity RNA methyltransferase RlmN (392 aa).

The Proton acceptor role is filled by Glu115. Positions 121–358 (EVDRGTLCIS…YKAGYASPIR (238 aa)) constitute a Radical SAM core domain. A disulfide bond links Cys128 and Cys369. [4Fe-4S] cluster is bound by residues Cys135, Cys139, and Cys142. S-adenosyl-L-methionine contacts are provided by residues 195 to 196 (GE), Ser227, 249 to 251 (SFH), and Asn326. Cys369 (S-methylcysteine intermediate) is an active-site residue.

It belongs to the radical SAM superfamily. RlmN family. [4Fe-4S] cluster is required as a cofactor.

Its subcellular location is the cytoplasm. The catalysed reaction is adenosine(2503) in 23S rRNA + 2 reduced [2Fe-2S]-[ferredoxin] + 2 S-adenosyl-L-methionine = 2-methyladenosine(2503) in 23S rRNA + 5'-deoxyadenosine + L-methionine + 2 oxidized [2Fe-2S]-[ferredoxin] + S-adenosyl-L-homocysteine. It carries out the reaction adenosine(37) in tRNA + 2 reduced [2Fe-2S]-[ferredoxin] + 2 S-adenosyl-L-methionine = 2-methyladenosine(37) in tRNA + 5'-deoxyadenosine + L-methionine + 2 oxidized [2Fe-2S]-[ferredoxin] + S-adenosyl-L-homocysteine. Functionally, specifically methylates position 2 of adenine 2503 in 23S rRNA and position 2 of adenine 37 in tRNAs. m2A2503 modification seems to play a crucial role in the proofreading step occurring at the peptidyl transferase center and thus would serve to optimize ribosomal fidelity. The sequence is that of Dual-specificity RNA methyltransferase RlmN from Jannaschia sp. (strain CCS1).